The following is a 140-amino-acid chain: General stress protein 26 (140 aa).

The polypeptide is General stress protein 26 (ydaG) (Bacillus subtilis (strain 168)).